Here is a 201-residue protein sequence, read N- to C-terminus: ATP-dependent Clp protease proteolytic subunit (201 aa).

The Nucleophile role is filled by S103. H128 is an active-site residue.

Belongs to the peptidase S14 family. As to quaternary structure, fourteen ClpP subunits assemble into 2 heptameric rings which stack back to back to give a disk-like structure with a central cavity, resembling the structure of eukaryotic proteasomes.

Its subcellular location is the cytoplasm. It carries out the reaction Hydrolysis of proteins to small peptides in the presence of ATP and magnesium. alpha-casein is the usual test substrate. In the absence of ATP, only oligopeptides shorter than five residues are hydrolyzed (such as succinyl-Leu-Tyr-|-NHMec, and Leu-Tyr-Leu-|-Tyr-Trp, in which cleavage of the -Tyr-|-Leu- and -Tyr-|-Trp bonds also occurs).. In terms of biological role, cleaves peptides in various proteins in a process that requires ATP hydrolysis. Has a chymotrypsin-like activity. Plays a major role in the degradation of misfolded proteins. The sequence is that of ATP-dependent Clp protease proteolytic subunit from Bordetella avium (strain 197N).